Reading from the N-terminus, the 432-residue chain is MKLKWESISNLQQNTYLIKLVAATLITCLAFRFFVFRFGQFSPVQVSVTGNSNSQISPTSVILSDNEDQIPVDIEVEKCDLFTGKWIKDPLGPIYTNESCGIVVDAHQNCITNGRPDSGFLNWKWKPNDCSLPRFDSLRFLQLMRNKSWAIIGDSIARNHVESLLCMLSTVEKPVEVYHDENYRSKRWHFPSYNFTVSNIWSPFLVQADIFEDSNGVSSAAVQLHLDKLDNTWTDLFPSLDYAIISSGEWFLKTAVYHENANPVGCHGCPESSNMTDLGFDYAYNTSLRHVMDFIAKSKTKGMIFFRTSIPDHFEDGEWHNGGTCKKTEPVGEEAVEMKVLNKILRDVEINQFERVVTEMGQESENLKLLDFAGMLLTRPDGHPGPYREFRPFDKDKNATVQNDCLHWCLPGPIDHLNDVILEIIVNGRTGK.

The helical; Signal-anchor for type II membrane protein transmembrane segment at 13-35 threads the bilayer; it reads QNTYLIKLVAATLITCLAFRFFV. The GDS motif signature appears at 153–155; it reads GDS. The short motif at 404–418 is the DCXHWCLPGXXDXWN motif element; that stretch reads DCLHWCLPGPIDHLN.

Belongs to the PC-esterase family. TBL subfamily.

It localises to the membrane. In terms of biological role, may act as a bridging protein that binds pectin and other cell wall polysaccharides. Probably involved in maintaining esterification of pectins. May be involved in the specific O-acetylation of cell wall polymers. This Arabidopsis thaliana (Mouse-ear cress) protein is Protein trichome birefringence-like 23 (TBL23).